The chain runs to 252 residues: Redox-sensing transcriptional repressor Rex (252 aa).

The H-T-H motif DNA-binding region spans 26–65 (LYLRALTALSERSVPTVSSEELAAAAGVNSAKLRKDFSYL). Residue 100-105 (GIGNLG) coordinates NAD(+). The interval 222 to 252 (EAAAEGAIPAAASKESADKGPDGDVPAVMPA) is disordered.

The protein belongs to the transcriptional regulatory Rex family. As to quaternary structure, homodimer.

The protein localises to the cytoplasm. Modulates transcription in response to changes in cellular NADH/NAD(+) redox state. The chain is Redox-sensing transcriptional repressor Rex from Streptomyces avermitilis (strain ATCC 31267 / DSM 46492 / JCM 5070 / NBRC 14893 / NCIMB 12804 / NRRL 8165 / MA-4680).